The following is a 156-amino-acid chain: Arginine repressor (156 aa).

This sequence belongs to the ArgR family.

Its subcellular location is the cytoplasm. It participates in amino-acid biosynthesis; L-arginine biosynthesis [regulation]. Functionally, regulates arginine biosynthesis genes. This chain is Arginine repressor, found in Cronobacter sakazakii (strain ATCC BAA-894) (Enterobacter sakazakii).